The following is a 115-amino-acid chain: Parathyroid hormone (115 aa).

The N-terminal stretch at 1–25 (MIPAKDMAKVMIVMLAICFLTKSDG) is a signal peptide. Positions 26–31 (KSVKKR) are excised as a propeptide. Positions 51-69 (RVEWLRKKLQDVHNFVALG) are important for receptor binding. The segment at 73–115 (APRDAGSQRPRKKEDNVLVESHEKSLGEADKADVNVLTKAKSQ) is disordered. Positions 84 to 105 (KKEDNVLVESHEKSLGEADKAD) are enriched in basic and acidic residues.

Belongs to the parathyroid hormone family. Interacts with PTH1R (via N-terminal extracellular domain).

It localises to the secreted. Parathyroid hormone elevates calcium level by dissolving the salts in bone and preventing their renal excretion. Acts by binding to its receptor, PTH1R, activating G protein-coupled receptor signaling. Stimulates [1-14C]-2-deoxy-D-glucose (2DG) transport and glycogen synthesis in osteoblastic cells. This Homo sapiens (Human) protein is Parathyroid hormone.